Consider the following 484-residue polypeptide: tRNA sulfurtransferase (484 aa).

Residues 63 to 167 (QAFGERLACI…GDKLYMVTKR (105 aa)) form the THUMP domain. Residues 185–186 (LI), lysine 267, glycine 289, and glutamine 298 contribute to the ATP site. Cysteine 346 and cysteine 458 are disulfide-bonded. One can recognise a Rhodanese domain in the interval 406–484 (IDTNEVVIDI…GYHNVKVYRP (79 aa)). Cysteine 458 functions as the Cysteine persulfide intermediate in the catalytic mechanism.

The protein belongs to the ThiI family.

It is found in the cytoplasm. The enzyme catalyses [ThiI sulfur-carrier protein]-S-sulfanyl-L-cysteine + a uridine in tRNA + 2 reduced [2Fe-2S]-[ferredoxin] + ATP + H(+) = [ThiI sulfur-carrier protein]-L-cysteine + a 4-thiouridine in tRNA + 2 oxidized [2Fe-2S]-[ferredoxin] + AMP + diphosphate. It carries out the reaction [ThiS sulfur-carrier protein]-C-terminal Gly-Gly-AMP + S-sulfanyl-L-cysteinyl-[cysteine desulfurase] + AH2 = [ThiS sulfur-carrier protein]-C-terminal-Gly-aminoethanethioate + L-cysteinyl-[cysteine desulfurase] + A + AMP + 2 H(+). It participates in cofactor biosynthesis; thiamine diphosphate biosynthesis. Its function is as follows. Catalyzes the ATP-dependent transfer of a sulfur to tRNA to produce 4-thiouridine in position 8 of tRNAs, which functions as a near-UV photosensor. Also catalyzes the transfer of sulfur to the sulfur carrier protein ThiS, forming ThiS-thiocarboxylate. This is a step in the synthesis of thiazole, in the thiamine biosynthesis pathway. The sulfur is donated as persulfide by IscS. The polypeptide is tRNA sulfurtransferase (Shewanella oneidensis (strain ATCC 700550 / JCM 31522 / CIP 106686 / LMG 19005 / NCIMB 14063 / MR-1)).